Consider the following 443-residue polypeptide: Probable glucomannan 4-beta-mannosyltransferase 11 (443 aa).

Aspartate 52 is an active-site residue. Residues aspartate 111 and aspartate 113 each contribute to the substrate site. Aspartate 205 is an active-site residue. A run of 4 helical transmembrane segments spans residues isoleucine 284–phenylalanine 304, isoleucine 321–leucine 341, glutamate 400–threonine 420, and valine 421–isoleucine 441.

It belongs to the glycosyltransferase 2 family. Plant cellulose synthase-like A subfamily.

The protein localises to the golgi apparatus membrane. The enzyme catalyses GDP-mannose + (glucomannan)n = GDP + (glucomannan)n+1.. Probable mannan synthase which consists of a 4-beta-mannosyltransferase activity on mannan using GDP-mannose. The beta-1,4-mannan product is the backbone for galactomannan synthesis by galactomannan galactosyltransferase. Galactomannan is a noncellulosic polysaccharides of plant cell wall. This is Probable glucomannan 4-beta-mannosyltransferase 11 from Arabidopsis thaliana (Mouse-ear cress).